Reading from the N-terminus, the 312-residue chain is Ribonuclease Z (312 aa).

Residues His63, His65, Asp67, His68, His141, Asp212, and His270 each contribute to the Zn(2+) site. Asp67 acts as the Proton acceptor in catalysis.

Belongs to the RNase Z family. Homodimer. The cofactor is Zn(2+).

The enzyme catalyses Endonucleolytic cleavage of RNA, removing extra 3' nucleotides from tRNA precursor, generating 3' termini of tRNAs. A 3'-hydroxy group is left at the tRNA terminus and a 5'-phosphoryl group is left at the trailer molecule.. In terms of biological role, zinc phosphodiesterase, which displays some tRNA 3'-processing endonuclease activity. Probably involved in tRNA maturation, by removing a 3'-trailer from precursor tRNA. The protein is Ribonuclease Z of Latilactobacillus sakei subsp. sakei (strain 23K) (Lactobacillus sakei subsp. sakei).